Here is a 488-residue protein sequence, read N- to C-terminus: Ribulose bisphosphate carboxylase large chain (488 aa).

Positions 127 and 177 each coordinate substrate. Lys179 acts as the Proton acceptor in catalysis. Residue Lys181 coordinates substrate. Mg(2+) is bound by residues Lys205, Asp207, and Glu208. Lys205 is modified (N6-carboxylysine). Catalysis depends on His297, which acts as the Proton acceptor. 3 residues coordinate substrate: Arg298, His330, and Ser382.

It belongs to the RuBisCO large chain family. Type I subfamily. In terms of assembly, heterohexadecamer of 8 large chains and 8 small chains. Requires Mg(2+) as cofactor.

The protein resides in the plastid. It localises to the chloroplast. The catalysed reaction is 2 (2R)-3-phosphoglycerate + 2 H(+) = D-ribulose 1,5-bisphosphate + CO2 + H2O. It catalyses the reaction D-ribulose 1,5-bisphosphate + O2 = 2-phosphoglycolate + (2R)-3-phosphoglycerate + 2 H(+). In terms of biological role, ruBisCO catalyzes two reactions: the carboxylation of D-ribulose 1,5-bisphosphate, the primary event in carbon dioxide fixation, as well as the oxidative fragmentation of the pentose substrate in the photorespiration process. Both reactions occur simultaneously and in competition at the same active site. The sequence is that of Ribulose bisphosphate carboxylase large chain (rbcL) from Pyropia dentata (Red alga).